Consider the following 129-residue polypeptide: Cytochrome c oxidase subunit 13, mitochondrial (129 aa).

The transit peptide at 1 to 9 directs the protein to the mitochondrion; sequence MFRQCAKRY. Residues 10 to 43 are Mitochondrial matrix-facing; it reads ASSLPPNALKPAFGPPDKVAAQKFKESLMATEKH. Residues 44–71 traverse the membrane as a helical segment; it reads AKDTSNMWVKISVWVALPAIALTAVNTY. Over 72-129 the chain is Mitochondrial intermembrane; that stretch reads FVEKEHAEHREHLKHVPDSEWPRDYEFMNIRSKPFFWGDGDKTLFWNPVVNRHIEHDD.

It belongs to the cytochrome c oxidase subunit 6A family. Component of the cytochrome c oxidase (complex IV, CIV), a multisubunit enzyme composed of 12 subunits. The complex is composed of a catalytic core of 3 subunits COX1, COX2 and COX3, encoded in the mitochondrial DNA, and 9 supernumerary subunits COX4, COX5A (or COX5B), COX6, COX7, COX8, COX9, COX12, COX13 and COX26, which are encoded in the nuclear genome. The complex exists as a monomer or a dimer and forms supercomplexes (SCs) in the inner mitochondrial membrane with a dimer of ubiquinol-cytochrome c oxidoreductase (cytochrome b-c1 complex, complex III, CIII), resulting in 2 different assemblies (supercomplexes III(2)IV and III(2)IV(2)). COX13 interacts with COX1 and COX3 on the intermembrane space (IMS) and COX4 on the matrix side.

It is found in the mitochondrion inner membrane. It functions in the pathway energy metabolism; oxidative phosphorylation. Its function is as follows. Component of the cytochrome c oxidase, the last enzyme in the mitochondrial electron transport chain which drives oxidative phosphorylation. The respiratory chain contains 3 multisubunit complexes succinate dehydrogenase (complex II, CII), ubiquinol-cytochrome c oxidoreductase (cytochrome b-c1 complex, complex III, CIII) and cytochrome c oxidase (complex IV, CIV), that cooperate to transfer electrons derived from NADH and succinate to molecular oxygen, creating an electrochemical gradient over the inner membrane that drives transmembrane transport and the ATP synthase. Cytochrome c oxidase is the component of the respiratory chain that catalyzes the reduction of oxygen to water. Electrons originating from reduced cytochrome c in the intermembrane space (IMS) are transferred via the dinuclear copper A center (CU(A)) of COX2 and heme A of COX1 to the active site in COX1, a binuclear center (BNC) formed by heme A3 and copper B (CU(B)). The BNC reduces molecular oxygen to 2 water molecules using 4 electrons from cytochrome c in the IMS and 4 protons from the mitochondrial matrix. The protein is Cytochrome c oxidase subunit 13, mitochondrial (COX13) of Saccharomyces cerevisiae (strain ATCC 204508 / S288c) (Baker's yeast).